Consider the following 213-residue polypeptide: tRNA (guanine-N(7)-)-methyltransferase (213 aa).

The S-adenosyl-L-methionine site is built by Glu44, Glu69, Asp96, and Asp118. Asp118 is a catalytic residue. Substrate is bound by residues Lys122, Asp154, and 192–195 (TEYE).

The protein belongs to the class I-like SAM-binding methyltransferase superfamily. TrmB family.

It carries out the reaction guanosine(46) in tRNA + S-adenosyl-L-methionine = N(7)-methylguanosine(46) in tRNA + S-adenosyl-L-homocysteine. Its pathway is tRNA modification; N(7)-methylguanine-tRNA biosynthesis. Its function is as follows. Catalyzes the formation of N(7)-methylguanine at position 46 (m7G46) in tRNA. The protein is tRNA (guanine-N(7)-)-methyltransferase of Limosilactobacillus reuteri (strain DSM 20016) (Lactobacillus reuteri).